Consider the following 172-residue polypeptide: NADH-quinone oxidoreductase subunit B (172 aa).

Positions 42, 43, 107, and 136 each coordinate [4Fe-4S] cluster.

This sequence belongs to the complex I 20 kDa subunit family. As to quaternary structure, NDH-1 is composed of 14 different subunits. Subunits NuoB, C, D, E, F, and G constitute the peripheral sector of the complex. It depends on [4Fe-4S] cluster as a cofactor.

It is found in the cell inner membrane. The enzyme catalyses a quinone + NADH + 5 H(+)(in) = a quinol + NAD(+) + 4 H(+)(out). Functionally, NDH-1 shuttles electrons from NADH, via FMN and iron-sulfur (Fe-S) centers, to quinones in the respiratory chain. The immediate electron acceptor for the enzyme in this species is believed to be ubiquinone. Couples the redox reaction to proton translocation (for every two electrons transferred, four hydrogen ions are translocated across the cytoplasmic membrane), and thus conserves the redox energy in a proton gradient. The chain is NADH-quinone oxidoreductase subunit B from Sulfurovum sp. (strain NBC37-1).